A 440-amino-acid chain; its full sequence is D-serine dehydratase (440 aa).

Lys116 is modified (N6-(pyridoxal phosphate)lysine).

This sequence belongs to the serine/threonine dehydratase family. DsdA subfamily. Monomer. Pyridoxal 5'-phosphate serves as cofactor.

The enzyme catalyses D-serine = pyruvate + NH4(+). The polypeptide is D-serine dehydratase (Salmonella typhi).